Consider the following 204-residue polypeptide: Large ribosomal subunit protein bL17 (204 aa).

Residues Gln124 to Ser204 are disordered. Residues Glu128 to Lys142 show a composition bias toward basic and acidic residues. The segment covering Ser156–Val191 has biased composition (low complexity). Acidic residues predominate over residues Glu192–Ser204.

This sequence belongs to the bacterial ribosomal protein bL17 family. Part of the 50S ribosomal subunit. Contacts protein L32.

The polypeptide is Large ribosomal subunit protein bL17 (Frankia alni (strain DSM 45986 / CECT 9034 / ACN14a)).